We begin with the raw amino-acid sequence, 356 residues long: S-adenosylmethionine:tRNA ribosyltransferase-isomerase (356 aa).

Belongs to the QueA family. In terms of assembly, monomer.

The protein resides in the cytoplasm. The enzyme catalyses 7-aminomethyl-7-carbaguanosine(34) in tRNA + S-adenosyl-L-methionine = epoxyqueuosine(34) in tRNA + adenine + L-methionine + 2 H(+). It participates in tRNA modification; tRNA-queuosine biosynthesis. Functionally, transfers and isomerizes the ribose moiety from AdoMet to the 7-aminomethyl group of 7-deazaguanine (preQ1-tRNA) to give epoxyqueuosine (oQ-tRNA). This Salmonella arizonae (strain ATCC BAA-731 / CDC346-86 / RSK2980) protein is S-adenosylmethionine:tRNA ribosyltransferase-isomerase.